The following is a 726-amino-acid chain: A-type inclusion protein A25 homolog (726 aa).

Positions 342–361 (TNTGIEEPHATGGDKEDQPI) are disordered. Residues 347 to 360 (EEPHATGGDKEDQP) show a composition bias toward basic and acidic residues. A run of 4 repeats spans residues 612–634 (RELEEERRRVKDLESRLDECTRN), 639–661 (QEVDALRSRIRELENKLTDCIES), 667–689 (TEISRLQSRISDLERQLNECRGN), and 691–713 (TEISRLESRISDLERQLNDCRRN). The segment at 612 to 713 (RELEEERRRV…ERQLNDCRRN (102 aa)) is 4 X approximate tandem repeats.

This sequence belongs to the poxviridae A25 protein family. As to quaternary structure, interacts (via N-terminus) with protein A26.

It localises to the virion. Its function is as follows. Structural protein that forms a matrix surrounding the mature virion (MV) through interaction with protein A26. Presence of protein A25 in the virion structurally prevents direct virus-cell fusion mechanism. In Camelus, this protein is A-type inclusion protein A25 homolog.